We begin with the raw amino-acid sequence, 162 residues long: Ribosome maturation factor RimM (162 aa).

The PRC barrel domain maps to 86–160 (EGRYYYFALI…GIHVDPIPGL (75 aa)).

The protein belongs to the RimM family. In terms of assembly, binds ribosomal protein uS19.

It is found in the cytoplasm. Functionally, an accessory protein needed during the final step in the assembly of 30S ribosomal subunit, possibly for assembly of the head region. Essential for efficient processing of 16S rRNA. May be needed both before and after RbfA during the maturation of 16S rRNA. It has affinity for free ribosomal 30S subunits but not for 70S ribosomes. The protein is Ribosome maturation factor RimM of Thermus thermophilus (strain ATCC BAA-163 / DSM 7039 / HB27).